The primary structure comprises 737 residues: Protein OPG064 (737 aa).

N-acetylmethionine; by host is present on Met1. Cys496 and Cys535 are disulfide-bonded.

This sequence belongs to the orthopoxvirus OPG064 family. In terms of assembly, interacts with host KLC2; this interaction promotes IEV trafficking by engaging the host kinesin-1 complex. Interacts with protein OPG056. N-acetylated on initiator methionine by host.

Plays a role in intracellular enveloped virus (IEV) transport to the cell surface on microtubules. Together with protein OPG056, forms a complex that interacts with host KLC2 (kinesin light chain isoform 2) to engage the kinesin-1 complex and thereby promote IEV trafficking. This Homo sapiens (Human) protein is Protein OPG064 (OPG064).